A 433-amino-acid polypeptide reads, in one-letter code: Enolase (433 aa).

(2R)-2-phosphoglycerate is bound at residue Gln-167. The active-site Proton donor is the Glu-209. Mg(2+) contacts are provided by Asp-246, Glu-291, and Asp-318. 4 residues coordinate (2R)-2-phosphoglycerate: Lys-343, Arg-372, Ser-373, and Lys-394. The active-site Proton acceptor is the Lys-343.

Belongs to the enolase family. As to quaternary structure, component of the RNA degradosome, a multiprotein complex involved in RNA processing and mRNA degradation. It depends on Mg(2+) as a cofactor.

It localises to the cytoplasm. It is found in the secreted. Its subcellular location is the cell surface. It carries out the reaction (2R)-2-phosphoglycerate = phosphoenolpyruvate + H2O. Its pathway is carbohydrate degradation; glycolysis; pyruvate from D-glyceraldehyde 3-phosphate: step 4/5. Its function is as follows. Catalyzes the reversible conversion of 2-phosphoglycerate (2-PG) into phosphoenolpyruvate (PEP). It is essential for the degradation of carbohydrates via glycolysis. This is Enolase from Marinomonas sp. (strain MWYL1).